Reading from the N-terminus, the 134-residue chain is Small ribosomal subunit protein uS11 (134 aa).

It belongs to the universal ribosomal protein uS11 family. In terms of assembly, part of the 30S ribosomal subunit. Interacts with proteins S7 and S18. Binds to IF-3.

Located on the platform of the 30S subunit, it bridges several disparate RNA helices of the 16S rRNA. Forms part of the Shine-Dalgarno cleft in the 70S ribosome. The chain is Small ribosomal subunit protein uS11 from Herminiimonas arsenicoxydans.